Consider the following 99-residue polypeptide: DNA-directed RNA polymerase subunit Rpo11 (99 aa).

This sequence belongs to the archaeal Rpo11/eukaryotic RPB11/RPC19 RNA polymerase subunit family. Part of the RNA polymerase complex. Forms an Rpo3-Rpo10-Rpo11-Rpo12 complex upon coexpression.

The protein resides in the cytoplasm. The catalysed reaction is RNA(n) + a ribonucleoside 5'-triphosphate = RNA(n+1) + diphosphate. DNA-dependent RNA polymerase (RNAP) catalyzes the transcription of DNA into RNA using the four ribonucleoside triphosphates as substrates. This chain is DNA-directed RNA polymerase subunit Rpo11, found in Methanocaldococcus jannaschii (strain ATCC 43067 / DSM 2661 / JAL-1 / JCM 10045 / NBRC 100440) (Methanococcus jannaschii).